Here is a 219-residue protein sequence, read N- to C-terminus: Segregation and condensation protein B (219 aa).

The disordered stretch occupies residues 193 to 219 (SLFAGGEEPSAEAADGGAGESTHGEEE). Over residues 196-207 (AGGEEPSAEAAD) the composition is skewed to low complexity.

It belongs to the ScpB family. Homodimer. Homodimerization may be required to stabilize the binding of ScpA to the Smc head domains. Component of a cohesin-like complex composed of ScpA, ScpB and the Smc homodimer, in which ScpA and ScpB bind to the head domain of Smc. The presence of the three proteins is required for the association of the complex with DNA.

The protein localises to the cytoplasm. In terms of biological role, participates in chromosomal partition during cell division. May act via the formation of a condensin-like complex containing Smc and ScpA that pull DNA away from mid-cell into both cell halves. The polypeptide is Segregation and condensation protein B (Symbiobacterium thermophilum (strain DSM 24528 / JCM 14929 / IAM 14863 / T)).